The primary structure comprises 90 residues: DNA-directed RNA polymerase subunit omega (90 aa).

The protein belongs to the RNA polymerase subunit omega family. As to quaternary structure, the RNAP catalytic core consists of 2 alpha, 1 beta, 1 beta' and 1 omega subunit. When a sigma factor is associated with the core the holoenzyme is formed, which can initiate transcription.

It catalyses the reaction RNA(n) + a ribonucleoside 5'-triphosphate = RNA(n+1) + diphosphate. Its function is as follows. Promotes RNA polymerase assembly. Latches the N- and C-terminal regions of the beta' subunit thereby facilitating its interaction with the beta and alpha subunits. The protein is DNA-directed RNA polymerase subunit omega of Saccharophagus degradans (strain 2-40 / ATCC 43961 / DSM 17024).